Here is a 179-residue protein sequence, read N- to C-terminus: Adenine phosphoribosyltransferase (179 aa).

It belongs to the purine/pyrimidine phosphoribosyltransferase family. In terms of assembly, homodimer.

The protein localises to the cytoplasm. The catalysed reaction is AMP + diphosphate = 5-phospho-alpha-D-ribose 1-diphosphate + adenine. The protein operates within purine metabolism; AMP biosynthesis via salvage pathway; AMP from adenine: step 1/1. Functionally, catalyzes a salvage reaction resulting in the formation of AMP, that is energically less costly than de novo synthesis. This is Adenine phosphoribosyltransferase from Bradyrhizobium diazoefficiens (strain JCM 10833 / BCRC 13528 / IAM 13628 / NBRC 14792 / USDA 110).